The primary structure comprises 467 residues: Coiled-coil domain-containing protein 174 (467 aa).

2 disordered regions span residues 40–77 (VFGK…EEQK) and 124–162 (EMEA…SEEW). Positions 63-99 (NRAEKDAEQKIEEQKTLDKAREKLEEKAKLYEKMTKG) form a coiled coil. 2 stretches are compositionally biased toward basic and acidic residues: residues 64 to 77 (RAEK…EEQK) and 124 to 139 (EMEA…KAGE). S197 is modified (phosphoserine). Residues 267-309 (LEMLREQTTDQRTKRENIKEKRKAILEARLAKLRQKKMKKSKE) adopt a coiled-coil conformation. Disordered stretches follow at residues 299–363 (LRQK…HIRE) and 378–453 (RQSD…TVTF). A compositionally biased stretch (pro residues) spans 324 to 336 (PLPPEPEAVPTPR). 2 stretches are compositionally biased toward basic and acidic residues: residues 348 to 363 (VQER…HIRE) and 378 to 389 (RQSDLRAERDPE). A compositionally biased stretch (polar residues) spans 425-437 (PDQSHGPSPEHTS). The span at 439 to 448 (TPAPDNPPQA) shows a compositional bias: pro residues.

Widely expressed.

It localises to the nucleus. Its function is as follows. Probably involved in neuronal development. The sequence is that of Coiled-coil domain-containing protein 174 (CCDC174) from Homo sapiens (Human).